The chain runs to 736 residues: Catalase-peroxidase (736 aa).

Over residues 1–10 the composition is skewed to basic and acidic residues; the sequence is MDAKTDDKGA. The segment at 1 to 26 is disordered; sequence MDAKTDDKGAGKCPFSGGSHGHRNRD. Residues 96-218 constitute a cross-link (tryptophyl-tyrosyl-methioninium (Trp-Tyr) (with M-244)); sequence WHSAGTYRIT…LGAVQMGLIY (123 aa). His-97 (proton acceptor) is an active-site residue. Positions 218–244 form a cross-link, tryptophyl-tyrosyl-methioninium (Tyr-Met) (with W-96); that stretch reads YVNPEGPNGNPDPVAAAKDIRETFARM. His-259 lines the heme b pocket.

This sequence belongs to the peroxidase family. Peroxidase/catalase subfamily. Homodimer or homotetramer. Requires heme b as cofactor. Post-translationally, formation of the three residue Trp-Tyr-Met cross-link is important for the catalase, but not the peroxidase activity of the enzyme.

The enzyme catalyses H2O2 + AH2 = A + 2 H2O. It carries out the reaction 2 H2O2 = O2 + 2 H2O. Its function is as follows. Bifunctional enzyme with both catalase and broad-spectrum peroxidase activity. In Rhodopseudomonas palustris (strain ATCC BAA-98 / CGA009), this protein is Catalase-peroxidase.